The primary structure comprises 357 residues: tRNA-specific 2-thiouridylase MnmA (357 aa).

ATP-binding positions include 8–15 (GISGGVDS) and Ile-34. Cys-96 acts as the Nucleophile in catalysis. Cys-96 and Cys-192 are joined by a disulfide. ATP is bound at residue Gly-120. Positions 142 to 144 (KDQ) are interaction with tRNA. Cys-192 functions as the Cysteine persulfide intermediate in the catalytic mechanism. Positions 301–302 (RY) are interaction with tRNA.

It belongs to the MnmA/TRMU family.

The protein localises to the cytoplasm. It carries out the reaction S-sulfanyl-L-cysteinyl-[protein] + uridine(34) in tRNA + AH2 + ATP = 2-thiouridine(34) in tRNA + L-cysteinyl-[protein] + A + AMP + diphosphate + H(+). In terms of biological role, catalyzes the 2-thiolation of uridine at the wobble position (U34) of tRNA, leading to the formation of s(2)U34. This is tRNA-specific 2-thiouridylase MnmA from Chlorobium phaeobacteroides (strain DSM 266 / SMG 266 / 2430).